The following is a 57-amino-acid chain: Large ribosomal subunit protein uL30 (57 aa).

Belongs to the universal ribosomal protein uL30 family. Part of the 50S ribosomal subunit.

The sequence is that of Large ribosomal subunit protein uL30 from Buchnera aphidicola subsp. Cinara cedri (strain Cc).